The chain runs to 50 residues: Protein HokA (50 aa).

Residues 7–24 (LLSLIVICFTLLFFTWMI) traverse the membrane as a helical segment.

The protein belongs to the Hok/Gef family.

It localises to the cell inner membrane. Functionally, toxic component of a type I toxin-antitoxin (TA) system. When overexpressed kills cells within minutes; causes collapse of the transmembrane potential and arrest of respiration. Its toxic effect is probably neutralized by antisense antitoxin RNA SokA. This Escherichia coli (strain K12) protein is Protein HokA.